Reading from the N-terminus, the 310-residue chain is Cytosolic Fe-S cluster assembly factor Nubp1 homolog (310 aa).

[4Fe-4S] cluster-binding residues include Cys9, Cys23, Cys26, and Cys32. Position 63 to 70 (63 to 70 (GKGGVGKS)) interacts with ATP. Positions 240 and 243 each coordinate [4Fe-4S] cluster.

This sequence belongs to the Mrp/NBP35 ATP-binding proteins family. NUBP1/NBP35 subfamily. In terms of assembly, heterotetramer of 2 Nubp1 and 2 Nubp2 chains. It depends on [4Fe-4S] cluster as a cofactor.

The protein localises to the cytoplasm. Its function is as follows. Component of the cytosolic iron-sulfur (Fe/S) protein assembly (CIA) machinery. Required for maturation of extramitochondrial Fe-S proteins. The Nubp1-Nubp2 heterotetramer forms a Fe-S scaffold complex, mediating the de novo assembly of an Fe-S cluster and its transfer to target apoproteins. This Drosophila mojavensis (Fruit fly) protein is Cytosolic Fe-S cluster assembly factor Nubp1 homolog.